The sequence spans 725 residues: Rab-like protein 6 (725 aa).

Residue M1 is modified to N-acetylmethionine. Positions 39-279 (GVQYNMKIVI…IFLEMMEARS (241 aa)) are small GTPase-like. GTP contacts are provided by residues 50–57 (GDRNTGKT), 100–104 (DVVDK), and 177–179 (YRD). Disordered regions lie at residues 281 to 364 (GHAS…PAPA) and 378 to 725 (PAAE…YEEL). Composition is skewed to low complexity over residues 291-325 (QSPS…QLSL) and 343-353 (AMPSSVHSSAP). A compositionally biased stretch (basic and acidic residues) spans 410-427 (GLDRSFLEDTSVPKDKKV). Residues S414, S436, S438, S480, S482, S483, and S502 each carry the phosphoserine modification. The segment covering 499 to 514 (QQCSEPETKWSSTKVS) has biased composition (polar residues). Residues 537 to 549 (DSERPQEGKDKQV) are compositionally biased toward basic and acidic residues. Acidic residues predominate over residues 569-578 (DDPDFESDES). 2 positions are modified to phosphoserine: S575 and S594. T597 carries the phosphothreonine modification. Residues 632-649 (MGPKESSDEDRDSKLPSK) are compositionally biased toward basic and acidic residues. S637, S638, and S644 each carry phosphoserine. The tract at residues 652 to 690 (KKKKKKSKEEEEKTTKKKSKHKKSKDKEEGKEDRKKKRK) is interaction with CDKN2A. A compositionally biased stretch (basic residues) spans 666 to 675 (TKKKSKHKKS). Over residues 707–725 (LGGGAPGSRHPGGGDYEEL) the composition is skewed to gly residues.

It belongs to the small GTPase superfamily. Rab family.

Its subcellular location is the nucleus. It is found in the cytoplasm. May enhance cellular proliferation. May reduce growth inhibitory activity of CDKN2A. In Mus musculus (Mouse), this protein is Rab-like protein 6 (Rabl6).